The following is a 546-amino-acid chain: 2-isopropylmalate synthase (546 aa).

Positions 8-271 (ILIFDTTLRD…NSFFGRSSDS (264 aa)) constitute a Pyruvate carboxyltransferase domain. Mn(2+)-binding residues include Asp-17, His-208, His-210, and Asn-244. A regulatory domain region spans residues 408–546 (QLSHVQVSCG…EKKVFSNPKN (139 aa)).

This sequence belongs to the alpha-IPM synthase/homocitrate synthase family. LeuA type 1 subfamily. Homodimer. Requires Mn(2+) as cofactor.

The protein localises to the cytoplasm. The enzyme catalyses 3-methyl-2-oxobutanoate + acetyl-CoA + H2O = (2S)-2-isopropylmalate + CoA + H(+). It participates in amino-acid biosynthesis; L-leucine biosynthesis; L-leucine from 3-methyl-2-oxobutanoate: step 1/4. Catalyzes the condensation of the acetyl group of acetyl-CoA with 3-methyl-2-oxobutanoate (2-ketoisovalerate) to form 3-carboxy-3-hydroxy-4-methylpentanoate (2-isopropylmalate). The protein is 2-isopropylmalate synthase of Prochlorococcus marinus (strain MIT 9515).